The sequence spans 465 residues: Transposase for insertion sequence IS1202 (465 aa).

The Integrase catalytic domain maps to 157–340; that stretch reads HPSRPRKKFA…APNPSERNLI (184 aa).

Required for the transposition of the insertion element. This chain is Transposase for insertion sequence IS1202, found in Streptococcus pneumoniae.